We begin with the raw amino-acid sequence, 101 residues long: Small ribosomal subunit protein uS14 (101 aa).

Residues 46–72 (FELNRQPRDASPVRVRNRDSRDGRPRG) are disordered. Over residues 61–70 (RNRDSRDGRP) the composition is skewed to basic and acidic residues.

This sequence belongs to the universal ribosomal protein uS14 family. In terms of assembly, part of the 30S ribosomal subunit. Contacts proteins S3 and S10.

Its function is as follows. Binds 16S rRNA, required for the assembly of 30S particles and may also be responsible for determining the conformation of the 16S rRNA at the A site. The polypeptide is Small ribosomal subunit protein uS14 (Corynebacterium diphtheriae (strain ATCC 700971 / NCTC 13129 / Biotype gravis)).